Reading from the N-terminus, the 662-residue chain is Histone-lysine N-methyltransferase SET9 (662 aa).

The 115-residue stretch at 115-229 (CPWEVSSTNR…AGEEITVTYG (115 aa)) folds into the SET domain. 3 disordered regions span residues 260–437 (VPVQ…SLDT), 484–516 (EEGQ…VRTP), and 601–662 (RVRN…FLDP). Polar residues-rich tracts occupy residues 304-326 (KANS…SIDQ), 355-379 (VSDS…TDVT), and 398-437 (KKQN…SLDT). A compositionally biased stretch (basic residues) spans 647–656 (RRSGRLRRVN).

This sequence belongs to the class V-like SAM-binding methyltransferase superfamily. Histone-lysine methyltransferase family. Suvar4-20 subfamily.

Its subcellular location is the nucleus. The protein localises to the chromosome. It catalyses the reaction L-lysyl(20)-[histone H4] + 3 S-adenosyl-L-methionine = N(6),N(6),N(6)-trimethyl-L-lysyl(20)-[histone H4] + 3 S-adenosyl-L-homocysteine + 3 H(+). Its function is as follows. Histone methyltransferase that trimethylates 'Lys-20' of histone H4 to form H4K20me3. This Gibberella zeae (strain ATCC MYA-4620 / CBS 123657 / FGSC 9075 / NRRL 31084 / PH-1) (Wheat head blight fungus) protein is Histone-lysine N-methyltransferase SET9 (SET9).